We begin with the raw amino-acid sequence, 239 residues long: Methylthioribulose-1-phosphate dehydratase (239 aa).

Cys94 is a substrate binding site. Positions 112 and 114 each coordinate Zn(2+). Residue Glu136 is the Proton donor/acceptor of the active site. His192 lines the Zn(2+) pocket.

The protein belongs to the aldolase class II family. MtnB subfamily. Requires Zn(2+) as cofactor.

It localises to the cytoplasm. It carries out the reaction 5-(methylsulfanyl)-D-ribulose 1-phosphate = 5-methylsulfanyl-2,3-dioxopentyl phosphate + H2O. It participates in amino-acid biosynthesis; L-methionine biosynthesis via salvage pathway; L-methionine from S-methyl-5-thio-alpha-D-ribose 1-phosphate: step 2/6. Catalyzes the dehydration of methylthioribulose-1-phosphate (MTRu-1-P) into 2,3-diketo-5-methylthiopentyl-1-phosphate (DK-MTP-1-P). Functions in the methionine salvage pathway. May play a role in apoptosis. In Xenopus tropicalis (Western clawed frog), this protein is Methylthioribulose-1-phosphate dehydratase.